The sequence spans 420 residues: 3-oxo-tetronate kinase (420 aa).

Residues Ser-258, 360–363 (GGET), and Gly-403 each bind ATP.

This sequence belongs to the four-carbon acid sugar kinase family.

It catalyses the reaction 3-dehydro-L-erythronate + ATP = 3-dehydro-4-O-phospho-L-erythronate + ADP + H(+). The catalysed reaction is 3-dehydro-D-erythronate + ATP = 3-dehydro-4-O-phospho-D-erythronate + ADP + H(+). Its function is as follows. Catalyzes the ATP-dependent phosphorylation of 3-oxo-tetronate to 3-oxo-tetronate 4-phosphate. The chain is 3-oxo-tetronate kinase from Salmonella typhimurium (strain LT2 / SGSC1412 / ATCC 700720).